Reading from the N-terminus, the 689-residue chain is uncharacterized protein (689 aa).

Composition is skewed to low complexity over residues 347–359 and 370–388; these read RPPSGSGEAAGEP and ASTASATAATSTRGPTRPT. The tract at residues 347 to 689 is disordered; the sequence is RPPSGSGEAA…KSQPPAAHTA (343 aa). Residues 405–480 show a composition bias toward basic and acidic residues; sequence ARPESEEQTD…QESQVARRDE (76 aa). Pro residues-rich tracts occupy residues 515-539 and 550-569; these read VPGPDPRLWVPPPHLLFPSPLPPMT and RCPPGPAEEPPTCRPRPPRP. 2 stretches are compositionally biased toward low complexity: residues 570-581 and 591-610; these read SSDTPLSAVSRP and TARVRFFLSSSSSSPSYSPA. The span at 611 to 620 shows a compositional bias: pro residues; sequence PLSPPSPVSP. The span at 666–676 shows a compositional bias: low complexity; the sequence is SVPSSASPSAS.

This is an uncharacterized protein from Homo sapiens (Human).